A 381-amino-acid chain; its full sequence is Terpene cyclase ATR13 (381 aa).

The protein belongs to the terpene synthase family.

Its pathway is mycotoxin biosynthesis. Its function is as follows. Terpene cyclase; part of the core atranone cluster (CAC) which products are predicted to catalyze most or all steps of mycotoxin atranone synthesis, starting from geranylgeranyl pyrophosphate (GGPP). The initial cyclization of GGPP to dolabellane is probably performed by the terpene cyclase ATR13. The Baeyer-Villiger oxidation near the end of the atranone synthesis, which converts atranones D and E to atranones F and G is predicted to be catalyzed by the monooxygenase ATR8. Of the CAC's other predicted gene products, the reducing PKS ATR6 might synthesize a polyketide chain. This polyketide is probably transferred onto the atranone backbone by the polyketide transferase ATR5. Other predicted CAC products include 4 oxygenases (ATR2, ATR3, ATR4, and ATR14), 3 short-chain reductases (ATR7, ATR9, and ATR10), and a methyltransferase (ATR12). These may all be involved in the various steps of atranone biosynthesis, although their specific roles must await experimental determination. This is Terpene cyclase ATR13 from Stachybotrys chlorohalonatus (strain IBT 40285).